The following is a 152-amino-acid chain: Deoxyuridine 5'-triphosphate nucleotidohydrolase (152 aa).

Substrate-binding positions include R71 to G73, N84, L88 to D90, and M98.

Belongs to the dUTPase family. Mg(2+) serves as cofactor.

It carries out the reaction dUTP + H2O = dUMP + diphosphate + H(+). It participates in pyrimidine metabolism; dUMP biosynthesis; dUMP from dCTP (dUTP route): step 2/2. Functionally, this enzyme is involved in nucleotide metabolism: it produces dUMP, the immediate precursor of thymidine nucleotides and it decreases the intracellular concentration of dUTP so that uracil cannot be incorporated into DNA. The sequence is that of Deoxyuridine 5'-triphosphate nucleotidohydrolase from Shigella flexneri.